The primary structure comprises 249 residues: Adenylate kinase (249 aa).

43–48 (GAGKGT) is a binding site for ATP. The NMP stretch occupies residues 63-92 (ATGDMLRAQVAAKTALGVEAKKIMDQGGLV). AMP is bound by residues T64, R69, 90 to 92 (GLV), 119 to 122 (GFPR), and Q126. Residues 160 to 197 (GRLVHPASGRSYHKLFNPPKKNMIDDITGEPLVQRSDD) form an LID region. ATP contacts are provided by residues R161 and 170 to 171 (SY). Residues R194 and R205 each contribute to the AMP site. Q233 contacts ATP.

Belongs to the adenylate kinase family. AK2 subfamily. As to quaternary structure, monomer.

The protein localises to the cytoplasm. It is found in the cytosol. Its subcellular location is the mitochondrion intermembrane space. The catalysed reaction is AMP + ATP = 2 ADP. Catalyzes the reversible transfer of the terminal phosphate group between ATP and AMP. Plays an important role in cellular energy homeostasis and in adenine nucleotide metabolism. Adenylate kinase activity is critical for regulation of the phosphate utilization and the AMP de novo biosynthesis pathways. In Scheffersomyces stipitis (strain ATCC 58785 / CBS 6054 / NBRC 10063 / NRRL Y-11545) (Yeast), this protein is Adenylate kinase.